The chain runs to 495 residues: UDP-N-acetylmuramoyl-L-alanyl-D-glutamate--2,6-diaminopimelate ligase (495 aa).

Leu-32 and Ser-34 together coordinate UDP-N-acetyl-alpha-D-muramoyl-L-alanyl-D-glutamate. 119-125 lines the ATP pocket; that stretch reads GTNGKTT. UDP-N-acetyl-alpha-D-muramoyl-L-alanyl-D-glutamate-binding positions include Asn-160, 161–162, Ser-188, Gln-194, and Arg-196; that span reads TT. Position 228 is an N6-carboxylysine (Lys-228). Residues Arg-390, 414–417, Gly-465, and Glu-469 each bind meso-2,6-diaminopimelate; that span reads DNPR. The Meso-diaminopimelate recognition motif motif lies at 414–417; sequence DNPR.

It belongs to the MurCDEF family. MurE subfamily. It depends on Mg(2+) as a cofactor. Carboxylation is probably crucial for Mg(2+) binding and, consequently, for the gamma-phosphate positioning of ATP.

It is found in the cytoplasm. It catalyses the reaction UDP-N-acetyl-alpha-D-muramoyl-L-alanyl-D-glutamate + meso-2,6-diaminopimelate + ATP = UDP-N-acetyl-alpha-D-muramoyl-L-alanyl-gamma-D-glutamyl-meso-2,6-diaminopimelate + ADP + phosphate + H(+). Its pathway is cell wall biogenesis; peptidoglycan biosynthesis. Catalyzes the addition of meso-diaminopimelic acid to the nucleotide precursor UDP-N-acetylmuramoyl-L-alanyl-D-glutamate (UMAG) in the biosynthesis of bacterial cell-wall peptidoglycan. This chain is UDP-N-acetylmuramoyl-L-alanyl-D-glutamate--2,6-diaminopimelate ligase, found in Vibrio cholerae serotype O1 (strain ATCC 39315 / El Tor Inaba N16961).